A 202-amino-acid chain; its full sequence is Myosin regulatory light chain 10 (202 aa).

The disordered stretch occupies residues methionine 1–glycine 21. EF-hand domains lie at serine 60 to isoleucine 95, aspartate 130 to arginine 165, and phenylalanine 166 to lysine 201. Ca(2+) contacts are provided by aspartate 73, asparagine 75, aspartate 77, and aspartate 84.

Myosin is a hexamer of 2 heavy chains and 4 light chains. In terms of tissue distribution, specifically expressed in precursor B- and T-lymphocytes.

This is Myosin regulatory light chain 10 (Myl10) from Mus musculus (Mouse).